A 341-amino-acid chain; its full sequence is tRNA N6-adenosine threonylcarbamoyltransferase (341 aa).

Fe cation contacts are provided by His-116 and His-120. Substrate is bound by residues 139-143, Asp-172, Gly-185, and Asn-274; that span reads LVSGG. A Fe cation-binding site is contributed by Asp-302.

The protein belongs to the KAE1 / TsaD family. Requires Fe(2+) as cofactor.

Its subcellular location is the cytoplasm. It carries out the reaction L-threonylcarbamoyladenylate + adenosine(37) in tRNA = N(6)-L-threonylcarbamoyladenosine(37) in tRNA + AMP + H(+). In terms of biological role, required for the formation of a threonylcarbamoyl group on adenosine at position 37 (t(6)A37) in tRNAs that read codons beginning with adenine. Is involved in the transfer of the threonylcarbamoyl moiety of threonylcarbamoyl-AMP (TC-AMP) to the N6 group of A37, together with TsaE and TsaB. TsaD likely plays a direct catalytic role in this reaction. This chain is tRNA N6-adenosine threonylcarbamoyltransferase, found in Vesicomyosocius okutanii subsp. Calyptogena okutanii (strain HA).